We begin with the raw amino-acid sequence, 319 residues long: ATP-dependent 6-phosphofructokinase (319 aa).

Glycine 11 is an ATP binding site. 21–25 (RAVVR) is an ADP binding site. ATP is bound by residues 72 to 73 (RC) and 102 to 105 (GDGS). Residue aspartate 103 coordinates Mg(2+). Residue 125–127 (TID) coordinates substrate. Residue aspartate 127 is the Proton acceptor of the active site. ADP is bound at residue arginine 154. Residues arginine 162 and 169-171 (MGR) each bind substrate. Residues 185-187 (GAE), arginine 211, and 213-215 (KKH) each bind ADP. Residues glutamate 222, arginine 243, and 249 to 252 (HIQR) contribute to the substrate site.

This sequence belongs to the phosphofructokinase type A (PFKA) family. ATP-dependent PFK group I subfamily. Prokaryotic clade 'B1' sub-subfamily. In terms of assembly, homotetramer. It depends on Mg(2+) as a cofactor.

The protein resides in the cytoplasm. The enzyme catalyses beta-D-fructose 6-phosphate + ATP = beta-D-fructose 1,6-bisphosphate + ADP + H(+). Its pathway is carbohydrate degradation; glycolysis; D-glyceraldehyde 3-phosphate and glycerone phosphate from D-glucose: step 3/4. Its activity is regulated as follows. Allosterically activated by ADP and other diphosphonucleosides, and allosterically inhibited by phosphoenolpyruvate. Its function is as follows. Catalyzes the phosphorylation of D-fructose 6-phosphate to fructose 1,6-bisphosphate by ATP, the first committing step of glycolysis. The protein is ATP-dependent 6-phosphofructokinase of Bacillus pumilus (strain SAFR-032).